Here is a 157-residue protein sequence, read N- to C-terminus: UPF0251 protein CLM_1546 (157 aa).

This sequence belongs to the UPF0251 family.

In Clostridium botulinum (strain Kyoto / Type A2), this protein is UPF0251 protein CLM_1546.